The following is a 159-amino-acid chain: Putative ribosomal RNA large subunit methyltransferase H (159 aa).

S-adenosyl-L-methionine is bound by residues Leu76, Gly108, and 127-132; that span reads FSKMTF.

Belongs to the RNA methyltransferase RlmH family.

It is found in the cytoplasm. It carries out the reaction pseudouridine(1915) in 23S rRNA + S-adenosyl-L-methionine = N(3)-methylpseudouridine(1915) in 23S rRNA + S-adenosyl-L-homocysteine + H(+). Specifically methylates the pseudouridine at position 1915 (m3Psi1915) in 23S rRNA. This is Putative ribosomal RNA large subunit methyltransferase H from Methanococcus vannielii (strain ATCC 35089 / DSM 1224 / JCM 13029 / OCM 148 / SB).